We begin with the raw amino-acid sequence, 493 residues long: Ribosomal protein uS12 methylthiotransferase RimO (493 aa).

An MTTase N-terminal domain is found at 5 to 121 (RTVALVTLGC…ISDRLQTILN (117 aa)). The [4Fe-4S] cluster site is built by cysteine 14, cysteine 50, cysteine 84, cysteine 198, cysteine 202, and cysteine 205. Positions 184–415 (LGTSPVASVK…QLAEELTSQR (232 aa)) constitute a Radical SAM core domain. Positions 417–487 (EERVGETLQV…GVDLVAEHHE (71 aa)) constitute a TRAM domain.

It belongs to the methylthiotransferase family. RimO subfamily. The cofactor is [4Fe-4S] cluster.

Its subcellular location is the cytoplasm. It carries out the reaction L-aspartate(89)-[ribosomal protein uS12]-hydrogen + (sulfur carrier)-SH + AH2 + 2 S-adenosyl-L-methionine = 3-methylsulfanyl-L-aspartate(89)-[ribosomal protein uS12]-hydrogen + (sulfur carrier)-H + 5'-deoxyadenosine + L-methionine + A + S-adenosyl-L-homocysteine + 2 H(+). Functionally, catalyzes the methylthiolation of an aspartic acid residue of ribosomal protein uS12. The polypeptide is Ribosomal protein uS12 methylthiotransferase RimO (Streptomyces griseus subsp. griseus (strain JCM 4626 / CBS 651.72 / NBRC 13350 / KCC S-0626 / ISP 5235)).